Here is a 513-residue protein sequence, read N- to C-terminus: Maturase K (513 aa).

This sequence belongs to the intron maturase 2 family. MatK subfamily.

It is found in the plastid. The protein localises to the chloroplast. Its function is as follows. Usually encoded in the trnK tRNA gene intron. Probably assists in splicing its own and other chloroplast group II introns. This Panicum capillare (Witchgrass) protein is Maturase K.